Here is a 411-residue protein sequence, read N- to C-terminus: LIM domain-binding protein 1 (411 aa).

Disordered stretches follow at residues 284 to 330 (PPAE…TFAL) and 367 to 411 (DAAN…QASQ). The span at 302–318 (SGGSTMSSGGGNTNNSN) shows a compositional bias: low complexity. In terms of domain architecture, LIM interaction domain (LID) spans 336 to 375 (DVMVVGEPTLMGGEFGDEDERLITRLENTQFDAANGIDDE).

The protein belongs to the LDB family. As to quaternary structure, forms homodimers and heterodimers. First expressed at stages 15-16 in presumptive limb mesoderm. As limb outgrowth proceeds, expressed in the entire limb bud, concentrating in the distal mesoderm throughout limb development. Both hindlimbs and forelimbs exhibit similar expression patterns.

It localises to the nucleus. Its function is as follows. Binds to the LIM domain of a wide variety of LIM domain-containing transcription factors. The sequence is that of LIM domain-binding protein 1 from Gallus gallus (Chicken).